The sequence spans 552 residues: Chaperonin GroEL 3 (552 aa).

Residues 30–33, lysine 51, 87–91, glycine 415, and aspartate 495 each bind ATP; these read TLGP and DGTTT.

Belongs to the chaperonin (HSP60) family. As to quaternary structure, forms a cylinder of 14 subunits composed of two heptameric rings stacked back-to-back. Interacts with the co-chaperonin GroES.

It is found in the cytoplasm. It catalyses the reaction ATP + H2O + a folded polypeptide = ADP + phosphate + an unfolded polypeptide.. In terms of biological role, together with its co-chaperonin GroES, plays an essential role in assisting protein folding. The GroEL-GroES system forms a nano-cage that allows encapsulation of the non-native substrate proteins and provides a physical environment optimized to promote and accelerate protein folding. In Mesorhizobium japonicum (strain LMG 29417 / CECT 9101 / MAFF 303099) (Mesorhizobium loti (strain MAFF 303099)), this protein is Chaperonin GroEL 3.